The chain runs to 1009 residues: Delphilin (1009 aa).

5 disordered regions span residues 28–82 (CRSK…SNTM), 170–193 (EGPVDYPQSDSEPEETPSAPRSRS), 322–369 (ASPD…SRDT), 414–635 (ELSS…SDNN), and 990–1009 (SETQGTENPKSPRIASPLAW). The span at 44-53 (RSQDHHERPQ) shows a compositional bias: basic and acidic residues. Positions 95-172 (TIRVYRGKKS…MPSLVVEEGP (78 aa)) constitute a PDZ domain. Positions 322 to 332 (ASPDSVDSNPY) are enriched in polar residues. 2 stretches are compositionally biased toward low complexity: residues 334–352 (SLDSPPASPLPSDELSPLP) and 427–439 (DDSTSVSYSSGSD). Composition is skewed to pro residues over residues 441 to 455 (IPPPPQSPPPPPPPL), 462 to 477 (SPLPITPEHLPQPPPA), and 484 to 493 (IAPPPPPPRP). The span at 521–535 (SSPQPSSQPILQLHQ) shows a compositional bias: low complexity. Residues 557 to 602 (AQHTRLQHPSQSIYQSQQTTVPRTSPSLTKQKSLHSQPSQQSFEGT) are compositionally biased toward polar residues. Pro residues predominate over residues 607–628 (VPPPPPPPLPPPCDPPPLPKPS). The 381-residue stretch at 629–1009 (PKASDNNHMS…SPRIASPLAW (381 aa)) folds into the FH2 domain.

The protein localises to the postsynaptic cell membrane. Its function is as follows. Postsynaptic scaffolding protein. The protein is Delphilin (grid2ip) of Danio rerio (Zebrafish).